A 351-amino-acid polypeptide reads, in one-letter code: GTP 3',8-cyclase (351 aa).

The Radical SAM core domain maps to 29 to 254; it reads RFGRVARDLR…EHGREDPSAP (226 aa). Arg-38 serves as a coordination point for GTP. [4Fe-4S] cluster-binding residues include Cys-45 and Cys-49. Tyr-51 is a binding site for S-adenosyl-L-methionine. Cys-52 lines the [4Fe-4S] cluster pocket. Arg-89 contacts GTP. Gly-93 provides a ligand contact to S-adenosyl-L-methionine. Thr-120 contributes to the GTP binding site. S-adenosyl-L-methionine is bound at residue Ser-144. Lys-181 contributes to the GTP binding site. S-adenosyl-L-methionine is bound at residue Met-214. Residues Cys-278 and Cys-281 each contribute to the [4Fe-4S] cluster site. 283-285 contributes to the GTP binding site; that stretch reads RTR. Cys-295 is a [4Fe-4S] cluster binding site.

The protein belongs to the radical SAM superfamily. MoaA family. Monomer and homodimer. The cofactor is [4Fe-4S] cluster.

It catalyses the reaction GTP + AH2 + S-adenosyl-L-methionine = (8S)-3',8-cyclo-7,8-dihydroguanosine 5'-triphosphate + 5'-deoxyadenosine + L-methionine + A + H(+). It participates in cofactor biosynthesis; molybdopterin biosynthesis. Catalyzes the cyclization of GTP to (8S)-3',8-cyclo-7,8-dihydroguanosine 5'-triphosphate. The sequence is that of GTP 3',8-cyclase from Rhodococcus opacus (strain B4).